We begin with the raw amino-acid sequence, 205 residues long: uncharacterized protein (205 aa).

To M.jannaschii MJ0638 and MJ1252 and M.tuberculosis Rv2003c.

This is an uncharacterized protein from Methanocaldococcus jannaschii (strain ATCC 43067 / DSM 2661 / JAL-1 / JCM 10045 / NBRC 100440) (Methanococcus jannaschii).